We begin with the raw amino-acid sequence, 577 residues long: Arginine--tRNA ligase (577 aa).

The short motif at 132-142 (ANPTGPLHVGH) is the 'HIGH' region element.

The protein belongs to the class-I aminoacyl-tRNA synthetase family. In terms of assembly, monomer.

It localises to the cytoplasm. It carries out the reaction tRNA(Arg) + L-arginine + ATP = L-arginyl-tRNA(Arg) + AMP + diphosphate. The polypeptide is Arginine--tRNA ligase (Herminiimonas arsenicoxydans).